The primary structure comprises 242 residues: Venom redulysin 2 (242 aa).

Residues 1 to 19 (MSKIWILLLLVGAVQFARG) form the signal peptide. Residues 20–46 (FPALEEEQEDDVIDWPSFEYDLSDEER) constitute a propeptide that is removed on maturation.

The protein belongs to the redulysin-like family. Contains 5 disulfide bonds. Expressed by the venom gland (posterior main gland) (at protein level).

It localises to the secreted. Its function is as follows. Highly abundant protein that may be responsible for the observed disruption of sensory neuron membranes, since it is homologous to proteins such as trialysin, which forms pores in lipid bilayers. Probable insecticidal toxin. The chain is Venom redulysin 2 from Platymeris rhadamanthus (Red spot assassin bug).